Consider the following 287-residue polypeptide: Bifunctional protein FolD (287 aa).

Residues 167–169 (GRS) and Thr-192 contribute to the NADP(+) site.

The protein belongs to the tetrahydrofolate dehydrogenase/cyclohydrolase family. Homodimer.

It catalyses the reaction (6R)-5,10-methylene-5,6,7,8-tetrahydrofolate + NADP(+) = (6R)-5,10-methenyltetrahydrofolate + NADPH. The catalysed reaction is (6R)-5,10-methenyltetrahydrofolate + H2O = (6R)-10-formyltetrahydrofolate + H(+). It participates in one-carbon metabolism; tetrahydrofolate interconversion. Its function is as follows. Catalyzes the oxidation of 5,10-methylenetetrahydrofolate to 5,10-methenyltetrahydrofolate and then the hydrolysis of 5,10-methenyltetrahydrofolate to 10-formyltetrahydrofolate. In Sorangium cellulosum (strain So ce56) (Polyangium cellulosum (strain So ce56)), this protein is Bifunctional protein FolD.